We begin with the raw amino-acid sequence, 588 residues long: Proline--tRNA ligase (588 aa).

This sequence belongs to the class-II aminoacyl-tRNA synthetase family. ProS type 1 subfamily. In terms of assembly, homodimer.

It is found in the cytoplasm. The enzyme catalyses tRNA(Pro) + L-proline + ATP = L-prolyl-tRNA(Pro) + AMP + diphosphate. Functionally, catalyzes the attachment of proline to tRNA(Pro) in a two-step reaction: proline is first activated by ATP to form Pro-AMP and then transferred to the acceptor end of tRNA(Pro). As ProRS can inadvertently accommodate and process non-cognate amino acids such as alanine and cysteine, to avoid such errors it has two additional distinct editing activities against alanine. One activity is designated as 'pretransfer' editing and involves the tRNA(Pro)-independent hydrolysis of activated Ala-AMP. The other activity is designated 'posttransfer' editing and involves deacylation of mischarged Ala-tRNA(Pro). The misacylated Cys-tRNA(Pro) is not edited by ProRS. The chain is Proline--tRNA ligase from Helicobacter hepaticus (strain ATCC 51449 / 3B1).